The sequence spans 134 residues: Large ribosomal subunit protein bL19 (134 aa).

A disordered region spans residues 108–134 (KSARIVERSDRSDKAKAQKAAAATAAE). The segment covering 111–123 (RIVERSDRSDKAK) has biased composition (basic and acidic residues). Low complexity predominate over residues 125–134 (QKAAAATAAE).

This sequence belongs to the bacterial ribosomal protein bL19 family.

In terms of biological role, this protein is located at the 30S-50S ribosomal subunit interface and may play a role in the structure and function of the aminoacyl-tRNA binding site. This Methylorubrum extorquens (strain PA1) (Methylobacterium extorquens) protein is Large ribosomal subunit protein bL19.